We begin with the raw amino-acid sequence, 188 residues long: Pyridoxal 5'-phosphate synthase subunit PdxT (188 aa).

47–49 (GES) provides a ligand contact to L-glutamine. The active-site Nucleophile is the Cys-79. L-glutamine-binding positions include Arg-106 and 134–135 (IR). Residues His-169 and Glu-171 each act as charge relay system in the active site.

It belongs to the glutaminase PdxT/SNO family. As to quaternary structure, in the presence of PdxS, forms a dodecamer of heterodimers. Only shows activity in the heterodimer.

The enzyme catalyses aldehydo-D-ribose 5-phosphate + D-glyceraldehyde 3-phosphate + L-glutamine = pyridoxal 5'-phosphate + L-glutamate + phosphate + 3 H2O + H(+). It catalyses the reaction L-glutamine + H2O = L-glutamate + NH4(+). It participates in cofactor biosynthesis; pyridoxal 5'-phosphate biosynthesis. In terms of biological role, catalyzes the hydrolysis of glutamine to glutamate and ammonia as part of the biosynthesis of pyridoxal 5'-phosphate. The resulting ammonia molecule is channeled to the active site of PdxS. The protein is Pyridoxal 5'-phosphate synthase subunit PdxT of Caldicellulosiruptor bescii (strain ATCC BAA-1888 / DSM 6725 / KCTC 15123 / Z-1320) (Anaerocellum thermophilum).